Here is a 126-residue protein sequence, read N- to C-terminus: Large ribosomal subunit protein bL19 (126 aa).

Belongs to the bacterial ribosomal protein bL19 family.

Its function is as follows. This protein is located at the 30S-50S ribosomal subunit interface and may play a role in the structure and function of the aminoacyl-tRNA binding site. This chain is Large ribosomal subunit protein bL19, found in Paracoccus denitrificans (strain Pd 1222).